Consider the following 193-residue polypeptide: MHRLPLLLLLGLLLAGSVAPARLVPKRLSQLGGFSWDNCDEGKDPAVIKSLTIQPDPIVVPGDVVVSLEGKTSVPLTAPQKVELTVEKEVAGFWVKIPCVEQLGSCSYENICDLIDEYIPPGESCPEPLHTYGLPCHCPFKEGTYSLPTSNFTVPDLELPSWLSTGNYRIQSILSSGGKRLGCIKIAASLKGR.

A signal peptide spans 1-20 (MHRLPLLLLLGLLLAGSVAP). Intrachain disulfides connect Cys-39–Cys-183, Cys-99–Cys-106, Cys-112–Cys-138, and Cys-125–Cys-136. N-linked (GlcNAc...) asparagine glycosylation is present at Asn-151.

Widely expressed. Most abundant in kidney and testis.

The protein localises to the lysosome. It catalyses the reaction cholesterol(in) = cholesterol(out). Functionally, binds gangliosides and stimulates ganglioside GM2 degradation. It stimulates only the breakdown of ganglioside GM2 and glycolipid GA2 by beta-hexosaminidase A. It extracts single GM2 molecules from membranes and presents them in soluble form to beta-hexosaminidase A for cleavage of N-acetyl-D-galactosamine and conversion to GM3. The large binding pocket can accommodate several single chain phospholipids and fatty acids, GM2A also exhibits some calcium-independent phospholipase activity. Has cholesterol transfer activity. The sequence is that of Ganglioside GM2 activator from Mus musculus (Mouse).